The sequence spans 946 residues: Protein translocase subunit SecA (946 aa).

ATP-binding positions include glutamine 90, 108–112, and aspartate 509; that span reads GEGKT.

This sequence belongs to the SecA family. In terms of assembly, monomer and homodimer. Part of the essential Sec protein translocation apparatus which comprises SecA, SecYEG and auxiliary proteins SecDF. Other proteins may also be involved.

The protein resides in the cell inner membrane. Its subcellular location is the cellular thylakoid membrane. It is found in the cytoplasm. It carries out the reaction ATP + H2O + cellular proteinSide 1 = ADP + phosphate + cellular proteinSide 2.. In terms of biological role, part of the Sec protein translocase complex. Interacts with the SecYEG preprotein conducting channel. Has a central role in coupling the hydrolysis of ATP to the transfer of proteins into and across the cell membrane, serving as an ATP-driven molecular motor driving the stepwise translocation of polypeptide chains across the membrane. Probably participates in protein translocation into and across both the cytoplasmic and thylakoid membranes in cyanobacterial cells. This Synechococcus sp. (strain RCC307) protein is Protein translocase subunit SecA.